A 236-amino-acid polypeptide reads, in one-letter code: 2-C-methyl-D-erythritol 4-phosphate cytidylyltransferase (236 aa).

Belongs to the IspD/TarI cytidylyltransferase family. IspD subfamily.

It catalyses the reaction 2-C-methyl-D-erythritol 4-phosphate + CTP + H(+) = 4-CDP-2-C-methyl-D-erythritol + diphosphate. It functions in the pathway isoprenoid biosynthesis; isopentenyl diphosphate biosynthesis via DXP pathway; isopentenyl diphosphate from 1-deoxy-D-xylulose 5-phosphate: step 2/6. Catalyzes the formation of 4-diphosphocytidyl-2-C-methyl-D-erythritol from CTP and 2-C-methyl-D-erythritol 4-phosphate (MEP). The chain is 2-C-methyl-D-erythritol 4-phosphate cytidylyltransferase from Pseudomonas syringae pv. tomato (strain ATCC BAA-871 / DC3000).